The chain runs to 360 residues: Photosystem II protein D1 (360 aa).

3 consecutive transmembrane segments (helical) span residues 29 to 46 (YVGW…TATT), 118 to 133 (QFLI…QWEL), and 142 to 156 (WICV…ARTA). Tyr-126 provides a ligand contact to pheophytin a. [CaMn4O5] cluster contacts are provided by Asp-170 and Glu-189. The helical transmembrane segment at 197–218 (FHMLGVAGVFGGSLFSAMHGSL) threads the bilayer. His-198 contacts chlorophyll a. Residues His-215 and 264–265 (SF) each bind a quinone. His-215 is a Fe cation binding site. His-272 serves as a coordination point for Fe cation. Residues 274–288 (FLGAWPVIGIWFTAM) traverse the membrane as a helical segment. [CaMn4O5] cluster-binding residues include His-332, Glu-333, Asp-342, and Ala-344. Positions 345–360 (SGEQAPVALTAPAING) are excised as a propeptide.

It belongs to the reaction center PufL/M/PsbA/D family. PSII is composed of 1 copy each of membrane proteins PsbA, PsbB, PsbC, PsbD, PsbE, PsbF, PsbH, PsbI, PsbJ, PsbK, PsbL, PsbM, PsbT, PsbX, PsbY, PsbZ, Psb30/Ycf12, peripheral proteins PsbO, CyanoQ (PsbQ), PsbU, PsbV and a large number of cofactors. It forms dimeric complexes. The cofactor is The D1/D2 heterodimer binds P680, chlorophylls that are the primary electron donor of PSII, and subsequent electron acceptors. It shares a non-heme iron and each subunit binds pheophytin, quinone, additional chlorophylls, carotenoids and lipids. D1 provides most of the ligands for the Mn4-Ca-O5 cluster of the oxygen-evolving complex (OEC). There is also a Cl(-1) ion associated with D1 and D2, which is required for oxygen evolution. The PSII complex binds additional chlorophylls, carotenoids and specific lipids.. Tyr-161 forms a radical intermediate that is referred to as redox-active TyrZ, YZ or Y-Z. Post-translationally, C-terminally processed by CtpA; processing is essential to allow assembly of the oxygen-evolving complex and thus photosynthetic growth.

The protein resides in the cellular thylakoid membrane. It carries out the reaction 2 a plastoquinone + 4 hnu + 2 H2O = 2 a plastoquinol + O2. Functionally, photosystem II (PSII) is a light-driven water:plastoquinone oxidoreductase that uses light energy to abstract electrons from H(2)O, generating O(2) and a proton gradient subsequently used for ATP formation. It consists of a core antenna complex that captures photons, and an electron transfer chain that converts photonic excitation into a charge separation. The D1/D2 (PsbA/PsbD) reaction center heterodimer binds P680, the primary electron donor of PSII as well as several subsequent electron acceptors. This Synechocystis sp. (strain PCC 6714) (Aphanocapsa sp. (strain PCC 6714)) protein is Photosystem II protein D1.